We begin with the raw amino-acid sequence, 307 residues long: Potassium channel subfamily K member 7 (307 aa).

Residues 1–10 are Cytoplasmic-facing; that stretch reads MGGLRPWSRY. Residues 11 to 31 traverse the membrane as a helical segment; sequence GLLVVAHLLALGLGAVVFQAL. A glycan (N-linked (GlcNAc...) asparagine) is linked at Asn-83. Positions 92-119 form an intramembrane region, pore-forming; it reads LPSALLFAASILTTTGYGHMAPLSPGGK. The chain crosses the membrane as a helical span at residues 120–140; sequence AFCMVYAALGLPASLALVATL. The Cytoplasmic portion of the chain corresponds to 141–170; it reads RHCLLPVLSRPRAWVAVHWQLSPARAALLQ. Residues 171 to 191 traverse the membrane as a helical segment; sequence AVALGLLVASSFVLLPALVLW. The pore-forming intramembrane region spans 199-227; that stretch reads LLGAVYFCFSSLSTIGLEDLLPGRGRSLH. Residues 233-253 form a helical membrane-spanning segment; sequence LGQLALLGYLLLGLLAMLLAV. Over 254 to 307 the chain is Cytoplasmic; it reads ETFSELPQVRAMGKFFRPSGPVTAEDQGGILGQDELALSTLPPAAPASGQAPAC.

Belongs to the two pore domain potassium channel (TC 1.A.1.8) family. In terms of assembly, homodimer.

It localises to the membrane. In terms of biological role, probable potassium channel subunit. No channel activity observed in vitro as protein remains in the endoplasmic reticulum. May need to associate with an as yet unknown partner in order to reach the plasma membrane. This is Potassium channel subfamily K member 7 (KCNK7) from Homo sapiens (Human).